Here is a 112-residue protein sequence, read N- to C-terminus: U15-hexatoxin-Hi1a (112 aa).

An N-terminal signal peptide occupies residues 1–18; it reads MNTLIAFAVLLLLSTTLG. A propeptide spanning residues 19-73 is cleaved from the precursor; the sequence is DTDDKVSHEEIQERKELSGISEELLLQQLEAVEAALMEKERLEEMEEDGNSREKR. 3 disulfides stabilise this stretch: Cys74/Cys88, Cys81/Cys93, and Cys87/Cys107.

The protein belongs to the neurotoxin 14 (magi-1) family. 08 (Ltx-4) subfamily. Expressed by the venom gland.

It is found in the secreted. Its function is as follows. Probable ion channel inhibitor. The polypeptide is U15-hexatoxin-Hi1a (Hadronyche infensa (Fraser island funnel-web spider)).